Reading from the N-terminus, the 280-residue chain is Protease HtpX (280 aa).

Transmembrane regions (helical) follow at residues 7-26 and 30-49; these read TFILLASLTALLVVIGGLLG and GMLIALVFAGVMNFSAYWYS. A Zn(2+)-binding site is contributed by H129. E130 is a catalytic residue. H133 lines the Zn(2+) pocket. Transmembrane regions (helical) follow at residues 146-166 and 178-198; these read ATIAGAISGIANMFMWLSMFG and VVGMIMMIVAPLAAGLIQMAI. Zn(2+) is bound at residue E203.

Belongs to the peptidase M48B family. Zn(2+) is required as a cofactor.

Its subcellular location is the cell inner membrane. This is Protease HtpX from Legionella pneumophila subsp. pneumophila (strain Philadelphia 1 / ATCC 33152 / DSM 7513).